Here is a 378-residue protein sequence, read N- to C-terminus: Apoptosis-inducing factor 1 (378 aa).

A helical transmembrane segment spans residues 7-25; sequence NIVVVGAGVFGVSVANHLY. Residues 12 to 16, arginine 51, lysine 56, and aspartate 283 each bind FAD; that span reads GAGVF.

The protein belongs to the FAD-dependent oxidoreductase family. It depends on FAD as a cofactor.

It localises to the mitochondrion outer membrane. Its subcellular location is the nucleus. In terms of biological role, putative FAD-dependent oxidoreductase involved in the resistance to cercosporin and other singlet oxygen-generating photosensitizers. Translocates from mitochondria to the nucleus under apoptotic conditions, where it degrades DNA and induces apoptosis. This is Apoptosis-inducing factor 1 (AIF1) from Saccharomyces cerevisiae (strain ATCC 204508 / S288c) (Baker's yeast).